The chain runs to 208 residues: NADH-ubiquinone oxidoreductase chain 4 (208 aa).

The next 6 membrane-spanning stretches (helical) occupy residues Val23–Trp43, Ser60–Ser80, Lys93–Asn113, Glu114–Thr134, Leu147–Ile167, and Pro188–Pro208.

This sequence belongs to the complex I subunit 4 family. Core subunit of respiratory chain NADH dehydrogenase (Complex I) which is composed of 45 different subunits.

Its subcellular location is the mitochondrion inner membrane. It catalyses the reaction a ubiquinone + NADH + 5 H(+)(in) = a ubiquinol + NAD(+) + 4 H(+)(out). In terms of biological role, core subunit of the mitochondrial membrane respiratory chain NADH dehydrogenase (Complex I) which catalyzes electron transfer from NADH through the respiratory chain, using ubiquinone as an electron acceptor. Essential for the catalytic activity and assembly of complex I. The protein is NADH-ubiquinone oxidoreductase chain 4 (MT-ND4) of Phodopus sungorus (Striped hairy-footed hamster).